The sequence spans 59 residues: U17-myrmicitoxin-Tb1f (59 aa).

A signal peptide spans 1–27; sequence MEKNRTTTFSVYLTIILFLISTFITMV. The propeptide occupies 28–31; sequence ITES. His58 is modified (histidine amide).

Expressed by the venom gland.

It is found in the secreted. The sequence is that of U17-myrmicitoxin-Tb1f from Tetramorium bicarinatum (Tramp ant).